The sequence spans 876 residues: uncharacterized protein (876 aa).

The segment covering Asp-37–Ser-48 has biased composition (basic and acidic residues). Disordered regions lie at residues Asp-37–Asn-67, Asp-112–Lys-155, Lys-226–Gln-254, and Met-330–Ile-353. Ser-48 and Ser-51 each carry phosphoserine. Over residues Leu-49–Ser-58 the composition is skewed to low complexity. The segment covering Gly-115 to Ser-131 has biased composition (polar residues). Residues Ser-360, Ser-510, Ser-552, and Ser-577 each carry the phosphoserine modification. Residues Pro-490–Ala-513 are disordered. Disordered stretches follow at residues Ile-661–Gln-728 and Arg-750–Leu-876. The span at Ser-689–Ser-699 shows a compositional bias: basic residues. Residues Ser-717–Ser-726 show a composition bias toward low complexity. Ser-775 carries the phosphoserine modification. Composition is skewed to low complexity over residues Asn-794–Leu-808 and Phe-842–Ser-854.

This is an uncharacterized protein from Saccharomyces cerevisiae (strain ATCC 204508 / S288c) (Baker's yeast).